A 302-amino-acid chain; its full sequence is Acetylglutamate kinase (302 aa).

Substrate-binding positions include 55 to 56 (GG), R77, and N176.

Belongs to the acetylglutamate kinase family. ArgB subfamily.

The protein resides in the cytoplasm. The catalysed reaction is N-acetyl-L-glutamate + ATP = N-acetyl-L-glutamyl 5-phosphate + ADP. It participates in amino-acid biosynthesis; L-arginine biosynthesis; N(2)-acetyl-L-ornithine from L-glutamate: step 2/4. In terms of biological role, catalyzes the ATP-dependent phosphorylation of N-acetyl-L-glutamate. This Corynebacterium efficiens (strain DSM 44549 / YS-314 / AJ 12310 / JCM 11189 / NBRC 100395) protein is Acetylglutamate kinase.